The chain runs to 230 residues: Sugar fermentation stimulation protein homolog (230 aa).

It belongs to the SfsA family.

The polypeptide is Sugar fermentation stimulation protein homolog (Clostridium botulinum (strain Alaska E43 / Type E3)).